The chain runs to 163 residues: 3-hydroxyacyl-[acyl-carrier-protein] dehydratase FabZ (163 aa).

The active site involves His-58.

The protein belongs to the thioester dehydratase family. FabZ subfamily.

It is found in the cytoplasm. The catalysed reaction is a (3R)-hydroxyacyl-[ACP] = a (2E)-enoyl-[ACP] + H2O. Functionally, involved in unsaturated fatty acids biosynthesis. Catalyzes the dehydration of short chain beta-hydroxyacyl-ACPs and long chain saturated and unsaturated beta-hydroxyacyl-ACPs. This is 3-hydroxyacyl-[acyl-carrier-protein] dehydratase FabZ from Francisella philomiragia subsp. philomiragia (strain ATCC 25017 / CCUG 19701 / FSC 153 / O#319-036).